Consider the following 374-residue polypeptide: Tuliposide A-converting enzyme b1, amyloplastic (374 aa).

The transit peptide at 1 to 68 (MSVALFCGPP…TNSSLSPSPT (68 aa)) directs the protein to the amyloplast. S226 functions as the Acyl-ester intermediate in the catalytic mechanism. Catalysis depends on charge relay system residues D316 and H348.

Belongs to the AB hydrolase superfamily. As to quaternary structure, homodimer. In terms of tissue distribution, highly expressed in pistil and bulb scales. Lower expression in stem, and barely detected in root, leaf, petal and stamen.

It localises to the plastid. It is found in the amyloplast. It carries out the reaction 6-tuliposide A = tulipalin A + D-glucose. Functionally, lactone-forming carboxylesterases, specifically catalyzing intramolecular transesterification, but not hydrolysis. Involved in the biosynthesis of tulipalins, defensive chemicals that show antimicrobial activities against a broad range of strains of bacteria and fungi. Substrates are 6-tuliposide A &gt; 6-tuliposide B. This Tulipa gesneriana (Garden tulip) protein is Tuliposide A-converting enzyme b1, amyloplastic (TCEA-B1).